Consider the following 80-residue polypeptide: U20-ctenitoxin-Pn1a (80 aa).

Intrachain disulfides connect C3–C20, C10–C26, C17–C52, C19–C40, C28–C38, C58–C71, and C75–C80.

As to expression, expressed by the venom gland.

The protein resides in the secreted. Its function is as follows. Omega-agatoxin are antagonists of voltage-gated calcium channels (Cav). Induces rapid general flaccid paralysis followed by death when injected into the cerebral ventricle of mice at dose levels of 3 ug per mouse. This Phoneutria nigriventer (Brazilian armed spider) protein is U20-ctenitoxin-Pn1a.